Consider the following 232-residue polypeptide: Translation initiation factor IF-3 (232 aa).

2 disordered regions span residues 1 to 21 (MAIQ…RTNR) and 184 to 232 (LQSQ…AAQR). Low complexity predominate over residues 193–208 (AAAAAAPAAAPAAGAP). Pro residues predominate over residues 209 to 222 (APTPAPAPAAPAPA). The span at 223–232 (PAAADPAAQR) shows a compositional bias: low complexity.

This sequence belongs to the IF-3 family. Monomer.

The protein localises to the cytoplasm. IF-3 binds to the 30S ribosomal subunit and shifts the equilibrium between 70S ribosomes and their 50S and 30S subunits in favor of the free subunits, thus enhancing the availability of 30S subunits on which protein synthesis initiation begins. In Anaeromyxobacter sp. (strain K), this protein is Translation initiation factor IF-3.